The following is a 127-amino-acid chain: CST complex subunit TEN1 (127 aa).

It belongs to the TEN1 family. In terms of assembly, component of the CST complex, composed of CTC1, TEN1 and STN1. Interacts with STN1. No interaction with POT1A, but competes with it for STN1 binding. Ubiquitous. High expression in meristematic tissues and in vasculature.

The protein localises to the nucleus. It localises to the chromosome. Its subcellular location is the telomere. In terms of biological role, required for the maintenance of meristems and stem cells through the reduction of DNA damage. Promotes telomere integrity by maintaining telomere length and proper architecture of the chromosome terminus. Negatively regulates telomerase repeat addition processivity. Hampers contacts between enzymatically active telomerase and CST complex. The sequence is that of CST complex subunit TEN1 from Arabidopsis thaliana (Mouse-ear cress).